The chain runs to 473 residues: Keratin, type I cuticular Ha6 (473 aa).

The interval 1–93 is head; the sequence is MATQICTPTF…FCEGAFNGNE (93 aa). An IF rod domain is found at 93 to 404; the sequence is EKATMQILND…RLLDGEDCKL (312 aa). The interval 94–128 is coil 1A; it reads KATMQILNDRLANYLEKVRQLEQENTQLECRIREW. Residues 129 to 139 are linker 1; it reads YECQIPYICPD. A coil 1B region spans residues 140-240; that stretch reads YQSYFKTAEE…HEEEVNALRS (101 aa). The tract at residues 241–256 is linker 12; that stretch reads QLGDRLNVEVDAAPPV. A coil 2 region spans residues 257 to 400; that stretch reads DLNKILDDMR…ATYRRLLDGE (144 aa). Residues 401 to 473 are tail; the sequence is DCKLPAHPCS…SREHVVPRAM (73 aa).

This sequence belongs to the intermediate filament family. Heterotetramer of two type I and two type II keratins. As to expression, in skin, only expressed in the suprabasal cells of tail scale epidermis. Suprabasally expressed in stratified squamous epithelia and also in the posterior unit of the complex filiform papillae of tongue. Expressed in rare anatomical sites in which an orthokeratinized stratum corneum would be too soft and a hard keratinized structure would be too rigid to meet the functional requirement of the respective epithelia.

This is Keratin, type I cuticular Ha6 from Mus musculus (Mouse).